Reading from the N-terminus, the 758-residue chain is Meiotic driver SPOK4 (758 aa).

Residues 4–41 adopt a coiled-coil conformation; it reads KDRITQLLRKLEEAKAREEEAKAREAQERCEKERLQLE. 2 disordered regions span residues 180–230 and 414–499; these read ELTQ…GVGI and LSSA…MADP. The segment covering 181–190 has biased composition (basic and acidic residues); that stretch reads LTQEDDRSSG. Residues 416-429 show a composition bias toward polar residues; that stretch reads SAASSQNTENSEYT. Over residues 457–468 the composition is skewed to basic and acidic residues; it reads NEHDEHDEDHSE.

It localises to the cytoplasm. The protein resides in the nucleus. Its function is as follows. Promotes unequal transmission of alleles from the parental zygote to progeny spores by acting as poison/antidote system, leading to poisoning of progeny that do not inherit the allele. May possess DNA nuclease activity that leads to spore killing, and a kinase activity that confers resistance to the nuclease activity. Can suppress meiotic drive by the P.comata SPOK1 protein. The chain is Meiotic driver SPOK4 from Podospora anserina (Pleurage anserina).